A 672-amino-acid chain; its full sequence is Beta-galactosidase GanA (672 aa).

A substrate-binding site is contributed by Arg-105. Residue Cys-109 coordinates Zn(2+). Asn-143 contacts substrate. The active-site Proton donor is the Glu-144. The Zn(2+) site is built by Cys-149, Cys-151, and Cys-154. Glu-308 serves as the catalytic Nucleophile. Residues Trp-316 and 356–359 (EKLH) each bind substrate.

The protein belongs to the glycosyl hydrolase 42 family. Homotrimer.

The catalysed reaction is Hydrolysis of terminal non-reducing beta-D-galactose residues in beta-D-galactosides.. With respect to regulation, inhibited by zinc, cobalt and copper ions. Its function is as follows. Involved in galactan degradation. Hydrolyzes galactooligosaccharides released by the endo-beta-1,4-galactanase GanB from galactan. Degrades galactotetraose, galactotriose and galactobiose, generating galactose as the end product. It is unable to use lactose. In vitro, shows maximal activity with o-nitrophenyl-beta-D-galactopyranoside (ONPG) and p-nitrophenyl-beta-D-galactopyranoside (PNPG) as substrates, trace activity with p-nitrophenyl-alpha-L-arabinopyranoside and o-nitrophenyl-beta-D-fucopyranoside as substrates, but no activity with p-nitrophenyl-alpha-D-galactopyranoside, p-nitrophenyl-beta-D-glucopyranoside, o-nitrophenyl-beta-D-xylopyranoside, p-nitrophenyl-beta-D-mannopyranoside or p-nitrophenyl-alpha-L-arabinofuranoside as substrates. This is Beta-galactosidase GanA from Bacillus subtilis (strain 168).